A 397-amino-acid chain; its full sequence is Phosphopentomutase (397 aa).

Positions 12, 289, 294, 330, 331, and 342 each coordinate Mn(2+).

This sequence belongs to the phosphopentomutase family. Requires Mn(2+) as cofactor.

The protein localises to the cytoplasm. The catalysed reaction is 2-deoxy-alpha-D-ribose 1-phosphate = 2-deoxy-D-ribose 5-phosphate. The enzyme catalyses alpha-D-ribose 1-phosphate = D-ribose 5-phosphate. It functions in the pathway carbohydrate degradation; 2-deoxy-D-ribose 1-phosphate degradation; D-glyceraldehyde 3-phosphate and acetaldehyde from 2-deoxy-alpha-D-ribose 1-phosphate: step 1/2. In terms of biological role, isomerase that catalyzes the conversion of deoxy-ribose 1-phosphate (dRib-1-P) and ribose 1-phosphate (Rib-1-P) to deoxy-ribose 5-phosphate (dRib-5-P) and ribose 5-phosphate (Rib-5-P), respectively. The protein is Phosphopentomutase of Limosilactobacillus reuteri (strain DSM 20016) (Lactobacillus reuteri).